The following is a 147-amino-acid chain: Hemoglobin subunit gamma (147 aa).

Positions 3 to 147 (HFTEEDKATI…VASALSSRYH (145 aa)) constitute a Globin domain. Positions 64 and 93 each coordinate heme b.

Belongs to the globin family. In terms of assembly, heterotetramer of two alpha chains and two gamma chains in fetal hemoglobin (Hb F). As to expression, red blood cells.

In terms of biological role, gamma chains make up the fetal hemoglobin F, in combination with alpha chains. The protein is Hemoglobin subunit gamma (HBG) of Macaca fuscata fuscata (Japanese macaque).